We begin with the raw amino-acid sequence, 263 residues long: Type-2Bb cytolytic delta-endotoxin (263 aa).

The protein belongs to the cyt1/cyt2 endotoxin family. Active after proteolytic processing.

Its function is as follows. Kills the larvae of dipteran insects by making pores in the epithelial cell membrane of the insect midgut. In Bacillus thuringiensis subsp. jegathesan, this protein is Type-2Bb cytolytic delta-endotoxin (cyt2Bb1).